We begin with the raw amino-acid sequence, 303 residues long: Archaeosortase A (303 aa).

7 helical membrane passes run 3-23, 36-56, 60-80, 93-113, 169-189, 200-220, and 259-279; these read GLLS…GAVA, TAAW…FTLV, YIEG…GWLL, AVAA…FTLL, VVLA…IAAV, LAIA…FIAI, and LAVV…PELL. Catalysis depends on C173, which acts as the Acyl-thioester intermediate. Catalysis depends on R214, which acts as the Proton donor.

Belongs to the exosortase/archaeosortase family. Archaeosortase A subfamily.

It is found in the cell membrane. Functionally, transpeptidase that recognizes and modifies its substrate by proteolytic cleavage of a sorting signal. Following cleavage, a covalent intermediate is formed via a thioester bond between the archaeosortase and its substrate, which is then transferred and covalently attached to the cell membrane. This sortase recognizes a tripartite structure consisting of a conserved Pro-Gly-Phe (PGF) motif, followed by a transmembrane alpha helix domain and a cluster of basic residues, usually at the C-terminus of target proteins. Confirmed substrates include the cell surface S-layer glycoprotein Csg and HVO_0405. ArtA is required for the C-terminal processing of Csg and for its lipidation and attachment to the archaeal plasma membrane. It is also required for the processing of HVO_0405, which contains an atypical central tripartite structure. This chain is Archaeosortase A, found in Haloferax volcanii (strain ATCC 29605 / DSM 3757 / JCM 8879 / NBRC 14742 / NCIMB 2012 / VKM B-1768 / DS2) (Halobacterium volcanii).